Consider the following 278-residue polypeptide: 4-deoxy-L-threo-5-hexosulose-uronate ketol-isomerase (278 aa).

Positions 196, 198, 203, and 245 each coordinate Zn(2+).

It belongs to the KduI family. Zn(2+) serves as cofactor.

The enzyme catalyses 5-dehydro-4-deoxy-D-glucuronate = 3-deoxy-D-glycero-2,5-hexodiulosonate. Its pathway is glycan metabolism; pectin degradation; 2-dehydro-3-deoxy-D-gluconate from pectin: step 4/5. Functionally, catalyzes the isomerization of 5-dehydro-4-deoxy-D-glucuronate to 3-deoxy-D-glycero-2,5-hexodiulosonate. The protein is 4-deoxy-L-threo-5-hexosulose-uronate ketol-isomerase of Salmonella typhimurium (strain LT2 / SGSC1412 / ATCC 700720).